Reading from the N-terminus, the 384-residue chain is Beta-glucuronosyltransferase GlcAT14C (384 aa).

Topologically, residues 1-11 are cytoplasmic; sequence MKRSHISSPRS. A signal-anchor for type II membrane protein membrane pass occupies residues 12-34; it reads YSRPAISIFGVFLLFLLVLTLSS. Topologically, residues 35–384 are lumenal; it reads RKPSDSSSGL…HENFRAKQCK (350 aa). Residues asparagine 156, asparagine 285, and asparagine 306 are each glycosylated (N-linked (GlcNAc...) asparagine).

The protein belongs to the glycosyltransferase 14 family.

The protein resides in the golgi apparatus membrane. Functionally, beta-glucuronosyltransferase involved in the biosynthesis of type II arabinogalactan (AG). Modifies both the beta-1,6-linked galactan and beta-1,3-linked galactan present in type II AG. In Arabidopsis thaliana (Mouse-ear cress), this protein is Beta-glucuronosyltransferase GlcAT14C.